A 303-amino-acid chain; its full sequence is Putative fimbrium subunit Fim1C (303 aa).

Residues 1 to 22 form the signal peptide; sequence MKKQALICALLATVLLPGCSED.

Belongs to the bacteroidetes fimbrillin superfamily. Mfa-like family. As to quaternary structure, may be part of the fimbrial tip.

It localises to the fimbrium. Its function is as follows. Putative component of the fimbrium tip. Fimbriae are filamentous appendages on the cell surface that mediate cell adhesion and biofilm formation. In Bacteroides uniformis (strain ATCC 8492 / DSM 6597 / CCUG 4942 / CIP 103695 / JCM 5828 / KCTC 5204 / NCTC 13054 / VPI 0061), this protein is Putative fimbrium subunit Fim1C (fim1C).